Consider the following 130-residue polypeptide: Large ribosomal subunit protein bL19 (130 aa).

This sequence belongs to the bacterial ribosomal protein bL19 family.

Functionally, this protein is located at the 30S-50S ribosomal subunit interface and may play a role in the structure and function of the aminoacyl-tRNA binding site. In Psychrobacter arcticus (strain DSM 17307 / VKM B-2377 / 273-4), this protein is Large ribosomal subunit protein bL19.